The sequence spans 316 residues: Phosphatidylglycerol--prolipoprotein diacylglyceryl transferase (316 aa).

The next 3 helical transmembrane spans lie at proline 18–leucine 38, glycine 47–glycine 67, and asparagine 95–phenylalanine 115. Arginine 141 is an a 1,2-diacyl-sn-glycero-3-phospho-(1'-sn-glycerol) binding site. Helical transmembrane passes span valine 188–tryptophan 208 and isoleucine 251–lysine 271. A disordered region spans residues alanine 292–arginine 316.

Belongs to the Lgt family.

It is found in the cell membrane. The enzyme catalyses L-cysteinyl-[prolipoprotein] + a 1,2-diacyl-sn-glycero-3-phospho-(1'-sn-glycerol) = an S-1,2-diacyl-sn-glyceryl-L-cysteinyl-[prolipoprotein] + sn-glycerol 1-phosphate + H(+). Its pathway is protein modification; lipoprotein biosynthesis (diacylglyceryl transfer). Functionally, catalyzes the transfer of the diacylglyceryl group from phosphatidylglycerol to the sulfhydryl group of the N-terminal cysteine of a prolipoprotein, the first step in the formation of mature lipoproteins. The sequence is that of Phosphatidylglycerol--prolipoprotein diacylglyceryl transferase from Corynebacterium glutamicum (strain ATCC 13032 / DSM 20300 / JCM 1318 / BCRC 11384 / CCUG 27702 / LMG 3730 / NBRC 12168 / NCIMB 10025 / NRRL B-2784 / 534).